A 506-amino-acid polypeptide reads, in one-letter code: Chaperone SurA (506 aa).

The first 29 residues, 1–29 (MMRRLHSSRRFSGSLLALALGLALPLAHA), serve as a signal peptide directing secretion. 2 consecutive PpiC domains span residues 219-320 (PVML…KVLQ) and 351-450 (VTQT…QVLE).

The protein localises to the periplasm. The catalysed reaction is [protein]-peptidylproline (omega=180) = [protein]-peptidylproline (omega=0). Its function is as follows. Chaperone involved in the correct folding and assembly of outer membrane proteins. Recognizes specific patterns of aromatic residues and the orientation of their side chains, which are found more frequently in integral outer membrane proteins. May act in both early periplasmic and late outer membrane-associated steps of protein maturation. This is Chaperone SurA from Bordetella avium (strain 197N).